A 537-amino-acid polypeptide reads, in one-letter code: Trypsin-resistant surface T6 protein (537 aa).

An N-terminal signal peptide occupies residues 1–22 (MLACLAILAVVGLGMTRVSALS). The segment at 310–330 (GNTYDNLDKKPDKGNGITSKE) is hydrophilic. Positions 504-508 (LPSTG) match the LPXTG sorting signal motif. The residue at position 507 (T507) is a Pentaglycyl murein peptidoglycan amidated threonine. Positions 508–537 (GSIGTYLFKAIGSAAMIGAIGIYIVKRRKA) are cleaved as a propeptide — removed by sortase.

The protein resides in the secreted. It is found in the cell wall. The sequence is that of Trypsin-resistant surface T6 protein (tee6) from Streptococcus pyogenes serotype M6 (strain ATCC BAA-946 / MGAS10394).